Here is a 29-residue protein sequence, read N- to C-terminus: Cytochrome b6-f complex subunit 8 (29 aa).

A helical transmembrane segment spans residues 3–23 (IVDIAWAALMVVFTFSLSLVV).

The protein belongs to the PetN family. The 4 large subunits of the cytochrome b6-f complex are cytochrome b6, subunit IV (17 kDa polypeptide, PetD), cytochrome f and the Rieske protein, while the 4 small subunits are PetG, PetL, PetM and PetN. The complex functions as a dimer.

The protein resides in the plastid. It localises to the chloroplast thylakoid membrane. Component of the cytochrome b6-f complex, which mediates electron transfer between photosystem II (PSII) and photosystem I (PSI), cyclic electron flow around PSI, and state transitions. This chain is Cytochrome b6-f complex subunit 8, found in Gnetum parvifolium (Small-leaved jointfir).